The following is a 332-amino-acid chain: Oxygen-dependent coproporphyrinogen-III oxidase (332 aa).

Ser119 contacts coproporphyrinogen III. The active-site Proton donor is the His133. Coproporphyrinogen III contacts are provided by residues 135-137 and 284-285; these read NVR and GR.

It belongs to the aerobic coproporphyrinogen-III oxidase family. Homodimer.

The enzyme catalyses coproporphyrinogen III + O2 + 2 H(+) = protoporphyrinogen IX + 2 CO2 + 2 H2O. Its pathway is porphyrin-containing compound metabolism; protoporphyrin-IX biosynthesis; protoporphyrinogen-IX from coproporphyrinogen-III (O2 route): step 1/1. Involved in the heme biosynthesis. Catalyzes the aerobic oxidative decarboxylation of propionate groups of rings A and B of coproporphyrinogen-III to yield the vinyl groups in protoporphyrinogen-IX. This chain is Oxygen-dependent coproporphyrinogen-III oxidase (cpox), found in Dictyostelium discoideum (Social amoeba).